A 111-amino-acid chain; its full sequence is Large ribosomal subunit protein P1 (111 aa).

The tract at residues 84–111 is disordered; the sequence is PAEAAAAEEKKEEEKEESDEDMGFGLFD.

Belongs to the eukaryotic ribosomal protein P1/P2 family. As to quaternary structure, P1 and P2 exist as dimers at the large ribosomal subunit. Post-translationally, phosphorylated.

Plays an important role in the elongation step of protein synthesis. The sequence is that of Large ribosomal subunit protein P1 from Aspergillus fumigatus (strain ATCC MYA-4609 / CBS 101355 / FGSC A1100 / Af293) (Neosartorya fumigata).